Consider the following 652-residue polypeptide: Adhesion G protein-coupled receptor E3 (652 aa).

The N-terminal stretch at 1-21 (MQGPLLLPGLCFLLSLFGAVT) is a signal peptide. At 22-357 (QKTKTSCAKC…TSQEEDPVLT (336 aa)) the chain is on the extracellular side. The EGF-like 1 domain maps to 24 to 66 (TKTSCAKCPPNASCVNNTHCTCNHGYTSGSGQKLFTFPLETCN). 6 cysteine pairs are disulfide-bonded: cysteine 28/cysteine 37, cysteine 31/cysteine 43, cysteine 45/cysteine 65, cysteine 71/cysteine 85, cysteine 79/cysteine 94, and cysteine 96/cysteine 117. N-linked (GlcNAc...) asparagine glycosylation is found at asparagine 34 and asparagine 39. The EGF-like 2; calcium-binding domain maps to 67–118 (DINECTPPYSVYCGFNAVCYNVEGSFYCQCVPGYRLHSGNEQFSNSNENTCQ). N-linked (GlcNAc...) asparagine glycosylation is found at asparagine 145, asparagine 189, asparagine 202, asparagine 250, asparagine 279, asparagine 327, and asparagine 334. Residues 183 to 351 (KVLKIQNDSV…AVLMALTSQE (169 aa)) form the GAIN-B domain. Cystine bridges form between cysteine 304–cysteine 333 and cysteine 321–cysteine 335. Residues 304 to 351 (CVYWKSTGQGSQWSRDGCFLIHVNKSHTMCNCSHLSSFAVLMALTSQE) form a GPS region. A helical membrane pass occupies residues 358–378 (VITYVGLSVSLLCLLLAALTF). Residues 379–389 (LLCKAIRNTST) are Cytoplasmic-facing. The chain crosses the membrane as a helical span at residues 390 to 410 (SLHLQLSLCLFLAHLLFLVGI). Over 411–416 (DRTEPK) the chain is Extracellular. Residues 417-437 (VLCSIIAGALHYLYLAAFTWM) traverse the membrane as a helical segment. Over 438 to 464 (LLEGVHLFLTARNLTVVNYSSINRLMK) the chain is Cytoplasmic. A helical membrane pass occupies residues 465-485 (WIMFPVGYGVPAVTVAISAAS). Residues 486 to 508 (WPHLYGTADRCWLHLDQGFMWSF) lie on the Extracellular side of the membrane. Residues 509–529 (LGPVCAIFSANLVLFILVFWI) traverse the membrane as a helical segment. Residues 530 to 557 (LKRKLSSLNSEVSTIQNTRMLAFKATAQ) are Cytoplasmic-facing. The chain crosses the membrane as a helical span at residues 558-578 (LFILGCTWCLGLLQVGPAAQV). Residues 579-580 (MA) lie on the Extracellular side of the membrane. Residues 581–601 (YLFTIINSLQGFFIFLVYCLL) form a helical membrane-spanning segment. Residues 602-652 (SQQVQKQYQKWFREIVKSKSESETYTLSSKMGPDSKPSEGDVFPGQVKRKY) are Cytoplasmic-facing. The disordered stretch occupies residues 621–652 (SESETYTLSSKMGPDSKPSEGDVFPGQVKRKY).

Belongs to the G-protein coupled receptor 2 family. Adhesion G-protein coupled receptor (ADGR) subfamily. In terms of assembly, forms a heterodimer, consisting of a large extracellular region (alpha subunit) non-covalently linked to a seven-transmembrane moiety (beta subunit). In terms of processing, proteolytically cleaved into 2 subunits, an extracellular alpha subunit and a seven-transmembrane subunit. In terms of tissue distribution, displays a predominantly leukocyte-restricted expression, with highest levels in neutrophils, monocytes and macrophages.

The protein localises to the cell membrane. It is found in the secreted. In terms of biological role, orphan receptor that may play a role myeloid-myeloid interactions during immune and inflammatory responses. A ligand for the soluble form of this receptor is present at the surface of monocytes-derived macrophages and activated neutrophils. The sequence is that of Adhesion G protein-coupled receptor E3 from Homo sapiens (Human).